The chain runs to 359 residues: Phosphoserine aminotransferase (359 aa).

Arg-41 provides a ligand contact to L-glutamate. Residues 75–76 (AS), Trp-101, Thr-151, Asp-171, and Gln-194 contribute to the pyridoxal 5'-phosphate site. Position 195 is an N6-(pyridoxal phosphate)lysine (Lys-195). Residue 236 to 237 (NT) participates in pyridoxal 5'-phosphate binding.

This sequence belongs to the class-V pyridoxal-phosphate-dependent aminotransferase family. SerC subfamily. In terms of assembly, homodimer. The cofactor is pyridoxal 5'-phosphate.

It localises to the cytoplasm. It catalyses the reaction O-phospho-L-serine + 2-oxoglutarate = 3-phosphooxypyruvate + L-glutamate. It carries out the reaction 4-(phosphooxy)-L-threonine + 2-oxoglutarate = (R)-3-hydroxy-2-oxo-4-phosphooxybutanoate + L-glutamate. The protein operates within amino-acid biosynthesis; L-serine biosynthesis; L-serine from 3-phospho-D-glycerate: step 2/3. Its pathway is cofactor biosynthesis; pyridoxine 5'-phosphate biosynthesis; pyridoxine 5'-phosphate from D-erythrose 4-phosphate: step 3/5. Its function is as follows. Catalyzes the reversible conversion of 3-phosphohydroxypyruvate to phosphoserine and of 3-hydroxy-2-oxo-4-phosphonooxybutanoate to phosphohydroxythreonine. The chain is Phosphoserine aminotransferase from Thiobacillus denitrificans (strain ATCC 25259 / T1).